The primary structure comprises 311 residues: Malate dehydrogenase (311 aa).

Residues 7-13 and D34 each bind NAD(+); that span reads GAAGGIG. 2 residues coordinate substrate: R81 and R87. Residues N94 and 117–119 contribute to the NAD(+) site; that span reads ITN. Substrate is bound by residues N119 and R153. Catalysis depends on H177, which acts as the Proton acceptor. Residue M227 participates in NAD(+) binding.

This sequence belongs to the LDH/MDH superfamily. MDH type 1 family. As to quaternary structure, homodimer.

The catalysed reaction is (S)-malate + NAD(+) = oxaloacetate + NADH + H(+). In terms of biological role, catalyzes the reversible oxidation of malate to oxaloacetate. The chain is Malate dehydrogenase from Shewanella loihica (strain ATCC BAA-1088 / PV-4).